Consider the following 25-residue polypeptide: Chlorocatechol 1,2-dioxygenase 1 (25 aa).

This sequence belongs to the intradiol ring-cleavage dioxygenase family. The cofactor is Fe(3+).

It carries out the reaction 3,5-dichlorocatechol + O2 = (2E,4E)-2,4-dichloromuconate + 2 H(+). It functions in the pathway xenobiotic degradation; 2-(2,4-dichlorophenoxy)propanoate degradation. This is Chlorocatechol 1,2-dioxygenase 1 (tfdC) from Delftia acidovorans (Pseudomonas acidovorans).